The sequence spans 374 residues: 4-hydroxy-3-methylbut-2-en-1-yl diphosphate synthase (flavodoxin) (374 aa).

[4Fe-4S] cluster contacts are provided by cysteine 272, cysteine 275, cysteine 307, and glutamate 314.

This sequence belongs to the IspG family. The cofactor is [4Fe-4S] cluster.

It catalyses the reaction (2E)-4-hydroxy-3-methylbut-2-enyl diphosphate + oxidized [flavodoxin] + H2O + 2 H(+) = 2-C-methyl-D-erythritol 2,4-cyclic diphosphate + reduced [flavodoxin]. It participates in isoprenoid biosynthesis; isopentenyl diphosphate biosynthesis via DXP pathway; isopentenyl diphosphate from 1-deoxy-D-xylulose 5-phosphate: step 5/6. In terms of biological role, converts 2C-methyl-D-erythritol 2,4-cyclodiphosphate (ME-2,4cPP) into 1-hydroxy-2-methyl-2-(E)-butenyl 4-diphosphate. The polypeptide is 4-hydroxy-3-methylbut-2-en-1-yl diphosphate synthase (flavodoxin) (Acidiphilium cryptum (strain JF-5)).